The sequence spans 161 residues: uncharacterized protein (161 aa).

This is an uncharacterized protein from Saimiri sciureus (Common squirrel monkey).